A 323-amino-acid chain; its full sequence is MSNLKQLRTRIKSVKSTQKITKAMQLVSASKMAKIKSQIANSNFYIEAVSKMMSAILSIDMYELSIEEQKFFNTVPNKANLLIVMTSQRGLCGTFNYSIIQQVKNDIKELENKGEQIKLIIIGKKGYEALKRQYVNYIDSYFELPKIHDENLMLQVKQKIMSAVENLEVSNCVIYFNKFKNAMTQIMTRQQILPVAKYQDDSMIDNPIVNLVGFGYKERGAKPINNRSATSDIVGESKSIDYNYEYEGENLISNLINLYVNSQINYALLQSRASEEGARMTAMENATNNANDLISKLVLKLNRSRQAIITTELIEIIAGSEAV.

The protein belongs to the ATPase gamma chain family. As to quaternary structure, F-type ATPases have 2 components, CF(1) - the catalytic core - and CF(0) - the membrane proton channel. CF(1) has five subunits: alpha(3), beta(3), gamma(1), delta(1), epsilon(1). CF(0) has three main subunits: a, b and c.

The protein resides in the cell inner membrane. In terms of biological role, produces ATP from ADP in the presence of a proton gradient across the membrane. The gamma chain is believed to be important in regulating ATPase activity and the flow of protons through the CF(0) complex. In Rickettsia rickettsii (strain Iowa), this protein is ATP synthase gamma chain.